The following is a 54-amino-acid chain: Protein YmjE (54 aa).

The polypeptide is Protein YmjE (Escherichia coli (strain K12)).